The following is a 249-amino-acid chain: Tryptophan synthase alpha chain (249 aa).

Residues Glu43 and Asp54 each act as proton acceptor in the active site.

The protein belongs to the TrpA family. Tetramer of two alpha and two beta chains.

It carries out the reaction (1S,2R)-1-C-(indol-3-yl)glycerol 3-phosphate + L-serine = D-glyceraldehyde 3-phosphate + L-tryptophan + H2O. Its pathway is amino-acid biosynthesis; L-tryptophan biosynthesis; L-tryptophan from chorismate: step 5/5. The alpha subunit is responsible for the aldol cleavage of indoleglycerol phosphate to indole and glyceraldehyde 3-phosphate. This Campylobacter jejuni subsp. jejuni serotype O:23/36 (strain 81-176) protein is Tryptophan synthase alpha chain.